A 35-amino-acid chain; its full sequence is Photosystem II reaction center protein T (35 aa).

The chain crosses the membrane as a helical span at residues 3–23 (ALVYTFLLVSTLGIIFFAIFF).

This sequence belongs to the PsbT family. As to quaternary structure, PSII is composed of 1 copy each of membrane proteins PsbA, PsbB, PsbC, PsbD, PsbE, PsbF, PsbH, PsbI, PsbJ, PsbK, PsbL, PsbM, PsbT, PsbY, PsbZ, Psb30/Ycf12, at least 3 peripheral proteins of the oxygen-evolving complex and a large number of cofactors. It forms dimeric complexes.

The protein localises to the plastid. It localises to the chloroplast thylakoid membrane. In terms of biological role, found at the monomer-monomer interface of the photosystem II (PS II) dimer, plays a role in assembly and dimerization of PSII. PSII is a light-driven water plastoquinone oxidoreductase, using light energy to abstract electrons from H(2)O, generating a proton gradient subsequently used for ATP formation. This Cedrus deodara (Deodar cedar) protein is Photosystem II reaction center protein T.